The following is a 256-amino-acid chain: Small ribosomal subunit protein uS3 (256 aa).

A KH type-2 domain is found at 39–121 (IRTYLTKQLS…TIRINVVEVT (83 aa)). Residues 227–256 (RHEQKFPLQQPKRRQQRRRPTFEDRSAQEA) are disordered. A compositionally biased stretch (basic and acidic residues) spans 246–256 (PTFEDRSAQEA).

This sequence belongs to the universal ribosomal protein uS3 family. In terms of assembly, part of the 30S ribosomal subunit. Forms a tight complex with proteins S10 and S14.

In terms of biological role, binds the lower part of the 30S subunit head. Binds mRNA in the 70S ribosome, positioning it for translation. This Synechococcus sp. (strain JA-2-3B'a(2-13)) (Cyanobacteria bacterium Yellowstone B-Prime) protein is Small ribosomal subunit protein uS3.